Consider the following 452-residue polypeptide: MTPRSYCVVGGGISGLTSAYRLRQAVGDDATITLFEPADRLGGVLRTEHIGGQPMDLGAEAFVLRRPEMPALLAELGLSDRQLASTGARPLIYSQQRLHPLPPQTVVGIPSSAGSMAGLVDDATLARIDAEAARPFTWQVGSDPAVADLVADRFGDQVVARSVDPLLSGVYAGSAATIGLRAAAPSVAAALDRGATSVTDAVRQALPPGSGGPVFGALDGGYQVLLDGLVRRSRVHWVRARVVQLERGWVLRDETGGRWQADAVILAVPAPRLARLVDGIAPRTHAAARQIVSASSAVVALAVPGGTAFPHCSGVLVAGDESPHAKAITLSSRKWGQRGDVALLRLSFGRFGDEPALTASDDQLLAWAADDLVTVFGVAVDPVDVRVRRWIEAMPQYGPGHADVVAELRAGLPPTLAVAGSYLDGIGVPACVGAAGRAVTSVIEALDAQVAR.

FAD contacts are provided by residues 10–15, 36–37, 58–61, V242, W390, and 426–428; these read GGGISG, EP, GAEA, and IGV.

The protein belongs to the protoporphyrinogen/coproporphyrinogen oxidase family. Coproporphyrinogen III oxidase subfamily. The cofactor is FAD.

It localises to the cytoplasm. It catalyses the reaction coproporphyrinogen III + 3 O2 = coproporphyrin III + 3 H2O2. Its pathway is porphyrin-containing compound metabolism; protoheme biosynthesis. Functionally, involved in coproporphyrin-dependent heme b biosynthesis. Catalyzes the oxidation of coproporphyrinogen III to coproporphyrin III. This chain is Coproporphyrinogen III oxidase, found in Mycobacterium bovis (strain ATCC BAA-935 / AF2122/97).